Here is a 704-residue protein sequence, read N- to C-terminus: Structure-specific endonuclease subunit SLX1 homolog (704 aa).

The 87-residue stretch at 4–90 (RFHCVYLLTS…TASARLRHTI (87 aa)) folds into the GIY-YIG domain. Disordered regions lie at residues 157 to 180 (ESPR…ADGV), 290 to 323 (ASFA…RVRT), and 354 to 378 (GAAL…SRPP). Composition is skewed to polar residues over residues 161-175 (VGTQ…SLQG) and 311-320 (AGSSTPSPQR). The SLX1-type zinc-finger motif lies at 446-526 (CSLCALPLQP…PSQPCPCPLC (81 aa)). 2 disordered regions span residues 601–629 (VPGA…SSPI) and 650–671 (ASLA…GHSN). A compositionally biased stretch (low complexity) spans 650–662 (ASLAALSPTSASP).

It belongs to the SLX1 family. Forms a heterodimer with a member of the SLX4 family. Requires a divalent metal cation as cofactor.

Its subcellular location is the nucleus. Its function is as follows. Catalytic subunit of a heterodimeric structure-specific endonuclease that resolves DNA secondary structures generated during DNA repair and recombination. Has endonuclease activity towards branched DNA substrates, introducing single-strand cuts in duplex DNA close to junctions with ss-DNA. The polypeptide is Structure-specific endonuclease subunit SLX1 homolog (Leishmania major).